The sequence spans 233 residues: Large ribosomal subunit protein uL1 (233 aa).

It belongs to the universal ribosomal protein uL1 family. As to quaternary structure, part of the 50S ribosomal subunit.

Its function is as follows. Binds directly to 23S rRNA. The L1 stalk is quite mobile in the ribosome, and is involved in E site tRNA release. Protein L1 is also a translational repressor protein, it controls the translation of the L11 operon by binding to its mRNA. In Paracoccus denitrificans (strain Pd 1222), this protein is Large ribosomal subunit protein uL1.